We begin with the raw amino-acid sequence, 1157 residues long: ATP-dependent helicase/deoxyribonuclease subunit B (1157 aa).

Residues 1–275 enclose the UvrD-like helicase ATP-binding domain; sequence MTLHAYLGRA…QYFNQLYRFN (275 aa). 8–15 provides a ligand contact to ATP; sequence GRAGTGKS. Residues 269–583 form the UvrD-like helicase C-terminal domain; sequence NQLYRFNNQD…SIGTMDLAKV (315 aa). Cysteine 784, cysteine 1112, cysteine 1115, and cysteine 1121 together coordinate [4Fe-4S] cluster.

The protein belongs to the helicase family. AddB/RexB type 1 subfamily. In terms of assembly, heterodimer of AddA and AddB. Mg(2+) serves as cofactor. The cofactor is [4Fe-4S] cluster.

The heterodimer acts as both an ATP-dependent DNA helicase and an ATP-dependent, dual-direction single-stranded exonuclease. Recognizes the chi site generating a DNA molecule suitable for the initiation of homologous recombination. The AddB subunit has 5' -&gt; 3' nuclease activity but not helicase activity. The chain is ATP-dependent helicase/deoxyribonuclease subunit B from Staphylococcus aureus (strain JH9).